The chain runs to 523 residues: Thiamine pathway transporter THI73 (523 aa).

The Cytoplasmic segment spans residues 1–79 (MKNMSQRSMD…LSPKVLRKVD (79 aa)). The helical transmembrane segment at 80-100 (LFILPFLCCTYLLMFLDKALL) threads the bilayer. The Extracellular portion of the chain corresponds to 101-118 (NYAASMGIKDHLKGNEFS). A helical transmembrane segment spans residues 119–139 (NLGTIFSAAYIFMEPVVTYLI). Residues 140 to 141 (QK) lie on the Cytoplasmic side of the membrane. The helical transmembrane segment at 142-162 (FPISKILGTFITVWGIVLACH) threads the bilayer. The Extracellular segment spans residues 163-176 (AACKTYASLMVVRT). A helical membrane pass occupies residues 177 to 197 (LLGLFESSSAVGCIAISGMYY). Over 198–207 (TKSEQSARIG) the chain is Cytoplasmic. The chain crosses the membrane as a helical span at residues 208-228 (FWATQAGTGYIVGGLISFGFL). Over 229–239 (HYHGTAFTSWQ) the chain is Extracellular. Residues 240-260 (IMFLVVGLVTVAFGVLTFLYL) form a helical membrane-spanning segment. Over 261–312 (PDNVTNAWFLNKEEKIQVVEHIRANQTGLETKKFKKQQVKELFLHDKFTWPM) the chain is Cytoplasmic. A helical membrane pass occupies residues 313–333 (LLLTACSQISTGAIGTFSVTI). At 334 to 345 (TGTFGFDKYETA) the chain is on the extracellular side. The chain crosses the membrane as a helical span at residues 346–366 (LLQLPIGAITAMIILITTQML). The Cytoplasmic portion of the chain corresponds to 367–371 (SRWGH). A helical membrane pass occupies residues 372–392 (ITLITTSMYIPAIIGCIVLIS). Residues 393–400 (LPLSHKIG) are Extracellular-facing. A helical membrane pass occupies residues 401–421 (NLFSLYLLYSGSCVITNIYIW). The Cytoplasmic segment spans residues 422-432 (NSCNTSGYTKR). The helical transmembrane segment at 433–452 (VFRNAITMIVYNVSCIIAPQ) threads the bilayer. Residues 453–466 (MFRAYSAPRYIPAK) lie on the Extracellular side of the membrane. Residues 467 to 487 (IALLVTQCVCVPLQLYIGYIC) form a helical membrane-spanning segment. Over 488–523 (KKENEKRDKEQEGQERKKYQFLDLTDIENRNFRYIY) the chain is Cytoplasmic.

It belongs to the major facilitator superfamily. Allantoate permease family.

Its subcellular location is the endoplasmic reticulum membrane. It localises to the cell membrane. Its function is as follows. Transports either thiamine or, rather, a related metabolite involved in the thiamine biosynthesis pathway. The protein is Thiamine pathway transporter THI73 (THI73) of Saccharomyces cerevisiae (strain ATCC 204508 / S288c) (Baker's yeast).